Here is a 110-residue protein sequence, read N- to C-terminus: Large ribosomal subunit protein uL22 (110 aa).

Belongs to the universal ribosomal protein uL22 family. In terms of assembly, part of the 50S ribosomal subunit.

In terms of biological role, this protein binds specifically to 23S rRNA; its binding is stimulated by other ribosomal proteins, e.g. L4, L17, and L20. It is important during the early stages of 50S assembly. It makes multiple contacts with different domains of the 23S rRNA in the assembled 50S subunit and ribosome. The globular domain of the protein is located near the polypeptide exit tunnel on the outside of the subunit, while an extended beta-hairpin is found that lines the wall of the exit tunnel in the center of the 70S ribosome. This is Large ribosomal subunit protein uL22 from Histophilus somni (strain 2336) (Haemophilus somnus).